A 313-amino-acid polypeptide reads, in one-letter code: 4-diphosphocytidyl-2-C-methyl-D-erythritol kinase (313 aa).

Residue lysine 11 is part of the active site. Residue 99–109 coordinates ATP; sequence PVAAGLAGGST. Aspartate 141 is an active-site residue.

It belongs to the GHMP kinase family. IspE subfamily.

The catalysed reaction is 4-CDP-2-C-methyl-D-erythritol + ATP = 4-CDP-2-C-methyl-D-erythritol 2-phosphate + ADP + H(+). The protein operates within isoprenoid biosynthesis; isopentenyl diphosphate biosynthesis via DXP pathway; isopentenyl diphosphate from 1-deoxy-D-xylulose 5-phosphate: step 3/6. Functionally, catalyzes the phosphorylation of the position 2 hydroxy group of 4-diphosphocytidyl-2C-methyl-D-erythritol. The protein is 4-diphosphocytidyl-2-C-methyl-D-erythritol kinase of Microcystis aeruginosa (strain NIES-843 / IAM M-2473).